The chain runs to 307 residues: 4-hydroxythreonine-4-phosphate dehydrogenase (307 aa).

Substrate contacts are provided by His126 and Thr127. A divalent metal cation is bound by residues His156, His195, and His251. Residues Lys259, Asn268, and Arg277 each coordinate substrate.

It belongs to the PdxA family. Homodimer. It depends on Zn(2+) as a cofactor. Mg(2+) serves as cofactor. The cofactor is Co(2+).

It localises to the cytoplasm. The catalysed reaction is 4-(phosphooxy)-L-threonine + NAD(+) = 3-amino-2-oxopropyl phosphate + CO2 + NADH. It participates in cofactor biosynthesis; pyridoxine 5'-phosphate biosynthesis; pyridoxine 5'-phosphate from D-erythrose 4-phosphate: step 4/5. In terms of biological role, catalyzes the NAD(P)-dependent oxidation of 4-(phosphooxy)-L-threonine (HTP) into 2-amino-3-oxo-4-(phosphooxy)butyric acid which spontaneously decarboxylates to form 3-amino-2-oxopropyl phosphate (AHAP). The polypeptide is 4-hydroxythreonine-4-phosphate dehydrogenase (Helicobacter pylori (strain P12)).